We begin with the raw amino-acid sequence, 513 residues long: MQLNSTEISDLIKQRIEQFEVVSEARNEGTIVAVSDGIIRIHGLADVMQGEMIELPGNRFAIALNLERDSVGAVVMGPYASLAEGDKVKTTGRILEVPVGRGLLGRVVNTLGEPIDGKGPIDNDGFSPVEMIAPGVIERKSVDQPVQTGYKAVDSMIPIGRGQRELIIGDRQIGKTALAIDAIINQKDTGIKCVYVAVGQKASTIANVVRKLEEHGALANTIVVVATASEAAALQYLAPYSGCSMGEYFRDRGEDSLIVYDDLSKQAVAYRQISLLLKRPPGREAYPGDVFYLHSRLLERASRVNAEYVEKFTKGEVKGQTGSLTALPIIETQAGDVSAFVPTNVISITDGQIFLETDLFNSGLRPAVNPGISVSRVGGAAQTKIIKKLSGGIRSALAQYRELAAFSQFASDLDDATRAQLEHGERVTELMKQKQYAPMSVADQSVSIFSAEKGYLKSVELNKIGDFEASLLSYMNSEHADLMKTINETGNYNADIEGELKAGLDKFVETQTW.

Residue 169–176 (GDRQIGKT) coordinates ATP.

Belongs to the ATPase alpha/beta chains family. F-type ATPases have 2 components, CF(1) - the catalytic core - and CF(0) - the membrane proton channel. CF(1) has five subunits: alpha(3), beta(3), gamma(1), delta(1), epsilon(1). CF(0) has three main subunits: a(1), b(2) and c(9-12). The alpha and beta chains form an alternating ring which encloses part of the gamma chain. CF(1) is attached to CF(0) by a central stalk formed by the gamma and epsilon chains, while a peripheral stalk is formed by the delta and b chains.

It is found in the cell inner membrane. The catalysed reaction is ATP + H2O + 4 H(+)(in) = ADP + phosphate + 5 H(+)(out). Its function is as follows. Produces ATP from ADP in the presence of a proton gradient across the membrane. The alpha chain is a regulatory subunit. This Shewanella woodyi (strain ATCC 51908 / MS32) protein is ATP synthase subunit alpha.